We begin with the raw amino-acid sequence, 110 residues long: Urease subunit beta (110 aa).

It belongs to the urease beta subunit family. Heterotrimer of UreA (gamma), UreB (beta) and UreC (alpha) subunits. Three heterotrimers associate to form the active enzyme.

It is found in the cytoplasm. It carries out the reaction urea + 2 H2O + H(+) = hydrogencarbonate + 2 NH4(+). It functions in the pathway nitrogen metabolism; urea degradation; CO(2) and NH(3) from urea (urease route): step 1/1. The chain is Urease subunit beta from Pseudoalteromonas translucida (strain TAC 125).